The sequence spans 393 residues: Formate-dependent phosphoribosylglycinamide formyltransferase (393 aa).

Residues 22-23 and Glu-82 each bind N(1)-(5-phospho-beta-D-ribosyl)glycinamide; that span reads EL. ATP contacts are provided by residues Arg-114, Lys-155, 160 to 165, 195 to 198, and Glu-203; these read SSGHGQ and EGFV. In terms of domain architecture, ATP-grasp spans 119-308; sequence RLAAEELGLP…EFALHARAIL (190 aa). Mg(2+) is bound by residues Glu-267 and Glu-279. Residues Asp-286, Lys-356, and 363–364 contribute to the N(1)-(5-phospho-beta-D-ribosyl)glycinamide site; that span reads RR.

The protein belongs to the PurK/PurT family. In terms of assembly, homodimer.

The enzyme catalyses N(1)-(5-phospho-beta-D-ribosyl)glycinamide + formate + ATP = N(2)-formyl-N(1)-(5-phospho-beta-D-ribosyl)glycinamide + ADP + phosphate + H(+). It participates in purine metabolism; IMP biosynthesis via de novo pathway; N(2)-formyl-N(1)-(5-phospho-D-ribosyl)glycinamide from N(1)-(5-phospho-D-ribosyl)glycinamide (formate route): step 1/1. Functionally, involved in the de novo purine biosynthesis. Catalyzes the transfer of formate to 5-phospho-ribosyl-glycinamide (GAR), producing 5-phospho-ribosyl-N-formylglycinamide (FGAR). Formate is provided by PurU via hydrolysis of 10-formyl-tetrahydrofolate. The sequence is that of Formate-dependent phosphoribosylglycinamide formyltransferase from Mannheimia succiniciproducens (strain KCTC 0769BP / MBEL55E).